We begin with the raw amino-acid sequence, 447 residues long: MENIEELWSATLKKIEEKLSKPSFDTWLKNTKAEALEKDTLIISAPNEFARDWLENQYTNLISQMLLEVTGSELNTKFIIPDSLEEIEEQKPMPKPKQSTDTGDSPKSMLNSKYTFDTFVIGAGNRFAHAASLAVAEAPAKAYNPLFIYGGVGLGKTHLMHAIGHYVRDHNPNAKVVYLTSEKFTNEFINAIMDNKSNHFRNKYRNIDVLLIDDIQFIAGKESTQEEFFHTFNALHGESKQIIISSDRPPKEIPTLEDRLRSRFEWGLITDITPPDLETRIAILNKKAKAEGLDIPNEVMLYIANQINTNIRELEGALIRVVAYSSLVNQDIDASLAADALKDIIPSSKPKEITIPAIQEIVAERYHIRLEDFAAKKRTKSIAFPRQIAMYLSRELTDASLPKIGEEFGGRDHTTVIHAHEKISKMLEQDTELDRDIEELKEKLKSI.

The domain I, interacts with DnaA modulators stretch occupies residues 1-74; the sequence is MENIEELWSA…MLLEVTGSEL (74 aa). The domain II stretch occupies residues 74-108; it reads LNTKFIIPDSLEEIEEQKPMPKPKQSTDTGDSPKS. Positions 85-107 are disordered; sequence EEIEEQKPMPKPKQSTDTGDSPK. A compositionally biased stretch (polar residues) spans 97–107; it reads KQSTDTGDSPK. The tract at residues 109–325 is domain III, AAA+ region; that stretch reads MLNSKYTFDT…GALIRVVAYS (217 aa). Residues Gly153, Gly155, Lys156, and Thr157 each contribute to the ATP site. The segment at 326–447 is domain IV, binds dsDNA; sequence SLVNQDIDAS…EELKEKLKSI (122 aa).

It belongs to the DnaA family. In terms of assembly, oligomerizes as a right-handed, spiral filament on DNA at oriC.

The protein resides in the cytoplasm. In terms of biological role, plays an essential role in the initiation and regulation of chromosomal replication. ATP-DnaA binds to the origin of replication (oriC) to initiate formation of the DNA replication initiation complex once per cell cycle. Binds the DnaA box (a 9 base pair repeat at the origin) and separates the double-stranded (ds)DNA. Forms a right-handed helical filament on oriC DNA; dsDNA binds to the exterior of the filament while single-stranded (ss)DNA is stabiized in the filament's interior. The ATP-DnaA-oriC complex binds and stabilizes one strand of the AT-rich DNA unwinding element (DUE), permitting loading of DNA polymerase. After initiation quickly degrades to an ADP-DnaA complex that is not apt for DNA replication. Binds acidic phospholipids. The chain is Chromosomal replication initiator protein DnaA from Oceanobacillus iheyensis (strain DSM 14371 / CIP 107618 / JCM 11309 / KCTC 3954 / HTE831).